We begin with the raw amino-acid sequence, 334 residues long: Glycerol-3-phosphate dehydrogenase [NAD(P)+] (334 aa).

Positions 13, 33, and 106 each coordinate NADPH. 3 residues coordinate sn-glycerol 3-phosphate: lysine 106, glycine 137, and serine 139. Alanine 141 provides a ligand contact to NADPH. Sn-glycerol 3-phosphate contacts are provided by lysine 192, aspartate 245, serine 255, arginine 256, and asparagine 257. Lysine 192 serves as the catalytic Proton acceptor. An NADPH-binding site is contributed by arginine 256. 2 residues coordinate NADPH: valine 280 and glutamate 282.

The protein belongs to the NAD-dependent glycerol-3-phosphate dehydrogenase family.

The protein resides in the cytoplasm. It carries out the reaction sn-glycerol 3-phosphate + NAD(+) = dihydroxyacetone phosphate + NADH + H(+). It catalyses the reaction sn-glycerol 3-phosphate + NADP(+) = dihydroxyacetone phosphate + NADPH + H(+). Its pathway is membrane lipid metabolism; glycerophospholipid metabolism. In terms of biological role, catalyzes the reduction of the glycolytic intermediate dihydroxyacetone phosphate (DHAP) to sn-glycerol 3-phosphate (G3P), the key precursor for phospholipid synthesis. This chain is Glycerol-3-phosphate dehydrogenase [NAD(P)+], found in Chlamydia felis (strain Fe/C-56) (Chlamydophila felis).